The chain runs to 83 residues: Hainantoxin-III 8 (83 aa).

An N-terminal signal peptide occupies residues 1 to 21; it reads MKASMFLALAGLVLLFVVGYA. Positions 22–48 are excised as a propeptide; that stretch reads SESEEKEFPRELLSKIFAVDDFTGEER. 3 disulfides stabilise this stretch: Cys50–Cys65, Cys57–Cys70, and Cys64–Cys77. Leu81 bears the Leucine amide mark.

Belongs to the neurotoxin 10 (Hwtx-1) family. 15 (Hntx-3) subfamily. In terms of assembly, monomer. As to expression, expressed by the venom gland.

It is found in the secreted. Functionally, selective antagonist of neuronal tetrodotoxin (TTX)-sensitive voltage-gated sodium channels (IC(50)=1270 nM on Nav1.1/SCN1A, 270 nM on Nav1.2/SCN2A, 491 nM on Nav1.3/SCN3A and 232 nM on Nav1.7/SCN9A). This toxin suppress Nav1.7 current amplitude without significantly altering the activation, inactivation, and repriming kinetics. Short extreme depolarizations partially activate the toxin-bound channel, indicating voltage-dependent inhibition of this toxin. This toxin increases the deactivation of the Nav1.7 current after extreme depolarizations. The toxin-Nav1.7 complex is gradually dissociated upon prolonged strong depolarizations in a voltage-dependent manner, and the unbound toxin rebinds to Nav1.7 after a long repolarization. Moreover, analysis of chimeric channels showed that the DIIS3-S4 linker is critical for toxin binding to Nav1.7. These data are consistent with this toxin interacting with Nav1.7 site 4 and trapping the domain II voltage sensor in the closed state. In Cyriopagopus hainanus (Chinese bird spider), this protein is Hainantoxin-III 8.